We begin with the raw amino-acid sequence, 471 residues long: Glutamate--tRNA ligase (471 aa).

A 'HIGH' region motif is present at residues 9–19 (PSPTGYLHVGG). Zn(2+)-binding residues include C98, C100, C125, and H127. Residues 237–241 (KLSKR) carry the 'KMSKS' region motif. K240 contributes to the ATP binding site.

This sequence belongs to the class-I aminoacyl-tRNA synthetase family. Glutamate--tRNA ligase type 1 subfamily. In terms of assembly, monomer. The cofactor is Zn(2+).

It is found in the cytoplasm. It carries out the reaction tRNA(Glu) + L-glutamate + ATP = L-glutamyl-tRNA(Glu) + AMP + diphosphate. Functionally, catalyzes the attachment of glutamate to tRNA(Glu) in a two-step reaction: glutamate is first activated by ATP to form Glu-AMP and then transferred to the acceptor end of tRNA(Glu). The protein is Glutamate--tRNA ligase of Citrobacter koseri (strain ATCC BAA-895 / CDC 4225-83 / SGSC4696).